The chain runs to 463 residues: Phosphomethylpyrimidine synthase (463 aa).

Substrate is bound by residues Asn80, Met109, Tyr138, His173, 193-195 (SRG), 234-237 (DGLR), and Glu273. A Zn(2+)-binding site is contributed by His277. Residue Tyr300 participates in substrate binding. Zn(2+) is bound at residue His341. Positions 421, 424, and 429 each coordinate [4Fe-4S] cluster.

This sequence belongs to the ThiC family. Homodimer. [4Fe-4S] cluster is required as a cofactor.

The enzyme catalyses 5-amino-1-(5-phospho-beta-D-ribosyl)imidazole + S-adenosyl-L-methionine = 4-amino-2-methyl-5-(phosphooxymethyl)pyrimidine + CO + 5'-deoxyadenosine + formate + L-methionine + 3 H(+). The protein operates within cofactor biosynthesis; thiamine diphosphate biosynthesis. Functionally, catalyzes the synthesis of the hydroxymethylpyrimidine phosphate (HMP-P) moiety of thiamine from aminoimidazole ribotide (AIR) in a radical S-adenosyl-L-methionine (SAM)-dependent reaction. The polypeptide is Phosphomethylpyrimidine synthase (Anaeromyxobacter sp. (strain K)).